Reading from the N-terminus, the 489-residue chain is MATKKMRISEKLWDSLEKDECNIDEVVQLMSLDEEELITKFAQEVSLRIRYLDEKPNEISFIAEATEDYSEPETESSDEETYFQQIRMERGESSETKREQQDLGATRKRKIEERNPFYTPPVHKGIPSSTGRGTEISTLNLDCISSFEERKVMIDKWFNEISLIIQTNKESFDTSLKVLTLMEHRTEGIAKSFIKQATWDILITPEKIIEEVLTGFYTMFIGLDYALSAEKEEEKRIKKAEELLIKSQLCNICELDNFTCFYEKQINQLKFEDFPKWIELYLGKIPIIGKQSKERWDNEKSFTTKYSLAFAKRIIQEEIAKYCDFQRTSKKLKNFSKKCCSKNSLDPLVSFGCRDTKKKDFKKSSKYKAYKKKKTLKKLWKKKKRKFTPGKYFSKKKPEKFCPQGRKKCRCWICTEEGHYANECPNRKSHQEKVKILIHGMNEGYYPLEDAYTGNLEVFSMEIIEETTSEEESTTDSDSSSSDDEQLSF.

A compositionally biased stretch (basic and acidic residues) spans 87-101 (RMERGESSETKREQQ). Residues 87-111 (RMERGESSETKREQQDLGATRKRKI) are disordered. Residues 107 to 110 (RKRK) carry the Nuclear localization signal motif. The CCHC-type zinc-finger motif lies at 409-426 (CRCWICTEEGHYANECPN). A disordered region spans residues 466 to 489 (ETTSEEESTTDSDSSSSDDEQLSF).

The protein belongs to the caulimoviridae capsid protein family. As to quaternary structure, interacts (via nuclear localization signal) with host importin alpha.

Its subcellular location is the virion. The protein localises to the host nucleus. Functionally, self assembles to form an icosahedral capsid, about 50 nm in diameter, nm, composed of 420 subunits of the viral capsid protein. The capsid encapsulates the genomic dsDNA. Following virus entry into host cell, provides nuclear import of the viral genome. Virus particles do not enter the nucleus, but dock at the nuclear membrane through the interaction with host importins. In Scrophularia californica (California bee plant), this protein is Probable capsid protein.